The following is a 178-amino-acid chain: uncharacterized protein (178 aa).

A signal peptide spans 1–23 (MTMFKKISVLFFTLILAGCSSWS).

This is an uncharacterized protein from Haemophilus influenzae (strain ATCC 51907 / DSM 11121 / KW20 / Rd).